A 309-amino-acid chain; its full sequence is Sulfate adenylyltransferase subunit 2 (309 aa).

Belongs to the PAPS reductase family. CysD subfamily. In terms of assembly, heterodimer composed of CysD, the smaller subunit, and CysN.

It catalyses the reaction sulfate + ATP + H(+) = adenosine 5'-phosphosulfate + diphosphate. Its pathway is sulfur metabolism; hydrogen sulfide biosynthesis; sulfite from sulfate: step 1/3. Its function is as follows. With CysN forms the ATP sulfurylase (ATPS) that catalyzes the adenylation of sulfate producing adenosine 5'-phosphosulfate (APS) and diphosphate, the first enzymatic step in sulfur assimilation pathway. APS synthesis involves the formation of a high-energy phosphoric-sulfuric acid anhydride bond driven by GTP hydrolysis by CysN coupled to ATP hydrolysis by CysD. The polypeptide is Sulfate adenylyltransferase subunit 2 (Mycobacterium sp. (strain KMS)).